Here is a 278-residue protein sequence, read N- to C-terminus: uncharacterized protein (278 aa).

Residues Met-1–Val-34 lie on the Cytoplasmic side of the membrane. Residues Leu-35 to Phe-55 form a helical membrane-spanning segment. The Extracellular portion of the chain corresponds to Lys-56 to Thr-129. The chain crosses the membrane as a helical span at residues Leu-130–Tyr-150. Over Met-151–Arg-180 the chain is Cytoplasmic. Residues Lys-181 to Thr-201 traverse the membrane as a helical segment. The Extracellular portion of the chain corresponds to Ile-202–Lys-205. A helical membrane pass occupies residues Thr-206–Leu-222. Residues Arg-223–Ala-278 are Cytoplasmic-facing.

The protein localises to the cell membrane. This is an uncharacterized protein from Saccharomyces cerevisiae (strain ATCC 204508 / S288c) (Baker's yeast).